The sequence spans 242 residues: MITFQNVNKHYGDFHVLKQINLQIEKGEVVVIIGPSGSGKSTLLRCINRLESINEGVLTVNGTAINDRKTDINQVRQNIGMVFQHFHLYPHKTVLQNIMLAPVKVLRQSPEQAKETARYYLEKVGIPDKADAYPSQLSGGQQQRVAIARGLAMKPEVMLFDEPTSALDPEMIGEVLDVMKTLAKEGMTMVVVTHEMGFAKEVADRIVFIDEGKILEEAVPAEFYANPKEERARLFLSRILNH.

In terms of domain architecture, ABC transporter spans 2–236 (ITFQNVNKHY…PKEERARLFL (235 aa)). Residue 34 to 41 (GPSGSGKS) coordinates ATP.

The protein belongs to the ABC transporter superfamily. In terms of assembly, the complex is composed of two ATP-binding proteins (GlnQ), two transmembrane proteins (GlnM and GlnP) and a solute-binding protein (GlnH).

It is found in the cell membrane. Part of the ABC transporter complex GlnHMPQ involved in glutamine transport. Probably responsible for energy coupling to the transport system. The polypeptide is Glutamine transport ATP-binding protein GlnQ (glnQ) (Bacillus subtilis (strain 168)).